The sequence spans 553 residues: Methyl-coenzyme M reductase II subunit alpha (553 aa).

Residue glutamine 150 participates in coenzyme F430 binding. Residues arginine 228, 259–260 (KH), and arginine 273 contribute to the coenzyme B site. Histidine 260 bears the Pros-methylhistidine mark. Arginine 274 bears the 5-methylarginine mark. Tyrosine 335 contributes to the coenzyme M binding site. Position 402 is a 2-methylglutamine (glutamine 402). Tyrosine 446 serves as a coordination point for coenzyme M. Glycine 447 is subject to 1-thioglycine. The residue at position 452 (aspartate 452) is a (Z)-2,3-didehydroaspartate. Cysteine 454 carries the post-translational modification S-methylcysteine.

Belongs to the methyl-coenzyme M reductase alpha subunit family. MCR is a hexamer of two alpha, two beta, and two gamma chains, forming a dimer of heterotrimers. Coenzyme F430 serves as cofactor. The alpha subunit contains six modified amino acids near the active site region. Is methylated on His-260, Arg-274, Gln-402 and Cys-454, probably by the action of specific S-adenosylmethionine-dependent methyltransferases. Also contains a thioglycine at position 447, forming a thiopeptide bond. Contains a didehydroaspartate residue at position 452. The methylation on C5 of Arg-274 is a post-translational methylation not essential in vivo, but which plays a role for the stability and structural integrity of MCR.

It catalyses the reaction coenzyme B + methyl-coenzyme M = methane + coenzyme M-coenzyme B heterodisulfide. Its pathway is one-carbon metabolism; methyl-coenzyme M reduction; methane from methyl-coenzyme M: step 1/1. In terms of biological role, component of the methyl-coenzyme M reductase (MCR) I that catalyzes the reductive cleavage of methyl-coenzyme M (CoM-S-CH3 or 2-(methylthio)ethanesulfonate) using coenzyme B (CoB or 7-mercaptoheptanoylthreonine phosphate) as reductant which results in the production of methane and the mixed heterodisulfide of CoB and CoM (CoM-S-S-CoB). This is the final step in methanogenesis. This Methanothermobacter thermautotrophicus (strain ATCC 29096 / DSM 1053 / JCM 10044 / NBRC 100330 / Delta H) (Methanobacterium thermoautotrophicum) protein is Methyl-coenzyme M reductase II subunit alpha (mrtA).